Consider the following 747-residue polypeptide: MIRRWLTISKSGKKKKAVNDTITEEVEKVDFKPVNHDINDELCYSESSDNPSSSLFVSNLDTKETFLNEDNNLQISSGLDYSSETCNQGSNYSQDGIFYISNAKAINAYGGIITQGPEAPILAMKVSDSMPYGDGSNKVFGYENFGNTCYCNSVLQCLYNLSSLRENILQFPKKSRESDQPRKKEMRGKKPRIFTEASFEKSIAGTNGHLPNPKPQSVDDGKPTPVNSVNSNTAGPSEKKSKFFKSFSAKHVQDNNKKEGSPAILTTGKPSSRPQDAPPLIVETPNEPGAPSRLSFENVTDRPPDVPRKIIVGRVLNYENPSRGSSNSNNLDLKGESNSSLSTPLDKKDTRRSSSSSQISPEHRKKSALIRGPVLNIDHSLNGSDKATLYSSLRDIFECITENTYLTGVVSPSSFVDVLKRENVLFNTTMHQDAHEFFNFLLNELSEYIERENKKIAASDINSDSEPSKSKNFISDLFQGTLTNQIKCLTCDNITSRDEPFLDFPIEVQGDEETDIQEILKSYHQREMLNGSNKFYCDECCGLQEAERLVGLKQLPDTLTLHLKRFKYSEKQNCNIKLFNNIHYPLTLNVCSSINSKVCQKYELAGIVVHMGGGPQHGHYVSLCKHEKFGWLLFDDETVEAVKEETVLEFTGESPNMATAYVLFYKAMYSNAVEKNDRENMAKEQDDNIDNLIKYDDWLRTCNSGQKKKEELPIADDLDTAIDDSFVSNTPIKSSKKKSRMFSFRKS.

The region spanning 140–668 (FGYENFGNTC…TAYVLFYKAM (529 aa)) is the USP domain. The active-site Nucleophile is cysteine 149. 2 disordered regions span residues 172–305 (PKKS…RPPD) and 318–367 (YENP…RKKS). Basic and acidic residues predominate over residues 174–183 (KSRESDQPRK). Serine 198 bears the Phosphoserine mark. A compositionally biased stretch (polar residues) spans 225 to 235 (PVNSVNSNTAG). Over residues 251–260 (HVQDNNKKEG) the composition is skewed to basic and acidic residues. Residues 319–343 (ENPSRGSSNSNNLDLKGESNSSLST) are compositionally biased toward polar residues. Histidine 619 serves as the catalytic Proton acceptor.

It belongs to the peptidase C19 family.

The catalysed reaction is Thiol-dependent hydrolysis of ester, thioester, amide, peptide and isopeptide bonds formed by the C-terminal Gly of ubiquitin (a 76-residue protein attached to proteins as an intracellular targeting signal).. In Saccharomyces cerevisiae (strain ATCC 204508 / S288c) (Baker's yeast), this protein is Ubiquitin carboxyl-terminal hydrolase 13 (UBP13).